Here is a 760-residue protein sequence, read N- to C-terminus: Catalase-peroxidase (760 aa).

Residues 1–24 (MAESKCPFKSQGSRSNVAGGGTRN) are disordered. A cross-link (tryptophyl-tyrosyl-methioninium (Trp-Tyr) (with M-268)) is located at residues 96–242 (WHSAGTYRVF…LAAAHMGLIY (147 aa)). The Proton acceptor role is filled by H97. The segment at residues 242 to 268 (YVNPEGPDGNPDPVAAAHDIRVTFGRM) is a cross-link (tryptophyl-tyrosyl-methioninium (Tyr-Met) (with W-96)). H283 lines the heme b pocket.

The protein belongs to the peroxidase family. Peroxidase/catalase subfamily. Homodimer or homotetramer. The cofactor is heme b. In terms of processing, formation of the three residue Trp-Tyr-Met cross-link is important for the catalase, but not the peroxidase activity of the enzyme.

The protein resides in the cytoplasm. The enzyme catalyses H2O2 + AH2 = A + 2 H2O. It carries out the reaction 2 H2O2 = O2 + 2 H2O. Functionally, bifunctional enzyme with both catalase and broad-spectrum peroxidase activity. This Aspergillus clavatus (strain ATCC 1007 / CBS 513.65 / DSM 816 / NCTC 3887 / NRRL 1 / QM 1276 / 107) protein is Catalase-peroxidase.